The sequence spans 277 residues: Large ribosomal subunit protein uL2 (277 aa).

2 disordered regions span residues 1 to 20 (MAVK…TTAD) and 210 to 277 (GRSR…RGGK). Residues 210 to 221 (GRSRWLGRKPHQ) show a composition bias toward basic residues.

It belongs to the universal ribosomal protein uL2 family. Part of the 50S ribosomal subunit. Forms a bridge to the 30S subunit in the 70S ribosome.

One of the primary rRNA binding proteins. Required for association of the 30S and 50S subunits to form the 70S ribosome, for tRNA binding and peptide bond formation. It has been suggested to have peptidyltransferase activity; this is somewhat controversial. Makes several contacts with the 16S rRNA in the 70S ribosome. This Deinococcus deserti (strain DSM 17065 / CIP 109153 / LMG 22923 / VCD115) protein is Large ribosomal subunit protein uL2.